The primary structure comprises 268 residues: Tryptophan synthase alpha chain (268 aa).

Residues Glu-49 and Asp-60 each act as proton acceptor in the active site.

Belongs to the TrpA family. In terms of assembly, tetramer of two alpha and two beta chains.

It carries out the reaction (1S,2R)-1-C-(indol-3-yl)glycerol 3-phosphate + L-serine = D-glyceraldehyde 3-phosphate + L-tryptophan + H2O. Its pathway is amino-acid biosynthesis; L-tryptophan biosynthesis; L-tryptophan from chorismate: step 5/5. The alpha subunit is responsible for the aldol cleavage of indoleglycerol phosphate to indole and glyceraldehyde 3-phosphate. This chain is Tryptophan synthase alpha chain, found in Xanthomonas euvesicatoria pv. vesicatoria (strain 85-10) (Xanthomonas campestris pv. vesicatoria).